Here is a 64-residue protein sequence, read N- to C-terminus: Large ribosomal subunit protein bL32 (64 aa).

A disordered region spans residues 1 to 28 (MAVQKSRVTPSRRGQRRSHDALTAKKLS).

The protein belongs to the bacterial ribosomal protein bL32 family.

This Xylella fastidiosa (strain 9a5c) protein is Large ribosomal subunit protein bL32 (rpmF).